The following is a 439-amino-acid chain: Gnt-II system L-idonate transporter (439 aa).

The Periplasmic portion of the chain corresponds to 1-11 (MPLIIIAAGVA). A helical membrane pass occupies residues 12–34 (LLLILMIGFKVNGFIALVLVAAV). Over 35–53 (VGFAEGMDAQAVLHSIQNG) the chain is Cytoplasmic. A helical membrane pass occupies residues 54 to 76 (IGSTLGGLAMILGFGAMLGKLIS). Residues 77–96 (DTGAAQRIATTLIATFGKKR) lie on the Periplasmic side of the membrane. The chain crosses the membrane as a helical span at residues 97 to 114 (VQWALVITGLVVGLAMFF). Residues 115-118 (EVGF) are Cytoplasmic-facing. Residues 119 to 141 (VLLLPLVFTIVASSGLPLLYVGV) traverse the membrane as a helical segment. The Periplasmic portion of the chain corresponds to 142–170 (PMVAALSVTHCFLPPHPGPTAIATIFEAN). The helical transmembrane segment at 171–193 (LGTTLLYGFIITIPTVIVAGPLF) threads the bilayer. Over 194–218 (SKLLTRFEKAPPEGLFNPHLFSEEE) the chain is Cytoplasmic. Residues 219–241 (MPSFWNSIFAAVIPVILMAIAAV) traverse the membrane as a helical segment. Residues 242–253 (CEITLPKTNTVR) are Periplasmic-facing. The chain crosses the membrane as a helical span at residues 254–276 (LFFEFVGNPAVALFIAIVIAIFT). Residues 277–290 (LGRRNGRTIEQIMD) lie on the Cytoplasmic side of the membrane. Residues 291-310 (IIGDSIGAIAMIVFIIAGGG) traverse the membrane as a helical segment. Residues 311-322 (AFKQVLVDSGVG) are Periplasmic-facing. A helical membrane pass occupies residues 323–345 (HYISHLMTGTTLSPLLMCWTVAA). Residues 346-348 (LLR) lie on the Cytoplasmic side of the membrane. The helical transmembrane segment at 349-371 (IALGSATVAAITTAGVVLPIINV) threads the bilayer. Topologically, residues 372–377 (THADPA) are periplasmic. The helical transmembrane segment at 378–400 (LMVLATGAGSVIASHVNDPGFWL) threads the bilayer. Residues 401–414 (FKGYFNLTVGETLR) are Cytoplasmic-facing. A helical transmembrane segment spans residues 415 to 437 (TWTVMETLISIMGLLGVLAINAV). At 438 to 439 (LH) the chain is on the periplasmic side.

This sequence belongs to the GntP permease family.

The protein resides in the cell inner membrane. The enzyme catalyses L-idonate(in) + H(+)(in) = L-idonate(out) + H(+)(out). It catalyses the reaction D-gluconate(in) + H(+)(in) = D-gluconate(out) + H(+)(out). The catalysed reaction is 5-dehydro-D-gluconate(in) + H(+)(in) = 5-dehydro-D-gluconate(out) + H(+)(out). Its pathway is carbohydrate acid metabolism; L-idonate degradation. In terms of biological role, transporter which is probably involved in L-idonate metabolism. Transports L-idonate from the periplasm across the inner membrane. Can also transport D-gluconate and 5-keto-D-gluconate. It has been reported that gluconate uptake probably occurs via a proton-symport mechanism in E.coli. The protein is Gnt-II system L-idonate transporter of Escherichia coli (strain K12).